The sequence spans 269 residues: MEDKFDLSSARLVVVKIGSTLVLDRETSGIRSSWLESLTEDVSRLLTRGQQVVLVSSGAVAIGSTIVDRLATYSQVSHKQAAAALGQVQLTHAYSESLKRHGLQVAQLLMGRGDLVDPAHRLNTRAVLLRLIDLGAVPLVNENDTTATCGTRVGDNDRLAAWIAEIINADLLILLSNVDGLFMKDPRNNPLTPMLTEVESITREIEAMATQSVDPYSSGGMISKIEAGKIAMNAGCRMIIANGTRSHPLYAIESGGPSTHFIPVARDRV.

Residue Lys-16 coordinates ATP. Residues Ser-57, Asp-144, and Asn-156 each contribute to the substrate site. Position 218-224 (218-224 (SGGMISK)) interacts with ATP.

The protein belongs to the glutamate 5-kinase family.

It localises to the cytoplasm. It carries out the reaction L-glutamate + ATP = L-glutamyl 5-phosphate + ADP. It participates in amino-acid biosynthesis; L-proline biosynthesis; L-glutamate 5-semialdehyde from L-glutamate: step 1/2. Catalyzes the transfer of a phosphate group to glutamate to form L-glutamate 5-phosphate. The chain is Glutamate 5-kinase 2 from Rhizobium meliloti (strain 1021) (Ensifer meliloti).